Reading from the N-terminus, the 739-residue chain is Oxysterol-binding protein-related protein 9 (739 aa).

In terms of domain architecture, PH spans 2–99 (ASIMEGPLSK…WIHALEETIL (98 aa)). 2 disordered regions span residues 220 to 292 (TQAS…SYSS) and 306 to 371 (SSTS…ESVE). The segment covering 249–259 (NLGSRQSPTPI) has biased composition (polar residues). Low complexity predominate over residues 260–276 (STGSGQSAPSSSLTSPS). Polar residues-rich tracts occupy residues 277–292 (HVNLSPNTVPDFSYSS), 306–330 (SSTSPKRCMDSSESATALTHSSTGA), and 338–352 (TESLNSSMSNGTNEA).

The protein belongs to the OSBP family.

It catalyses the reaction a 1,2-diacyl-sn-glycero-3-phospho-(1D-myo-inositol 4-phosphate)(out) + a 1,2-diacyl-sn-glycero-3-phospho-L-serine(in) = a 1,2-diacyl-sn-glycero-3-phospho-(1D-myo-inositol 4-phosphate)(in) + a 1,2-diacyl-sn-glycero-3-phospho-L-serine(out). Interacts with OSBPL11 to function as lipid transfer proteins. Together they form a heterodimer that localizes at the ER-trans-Golgi membrane contact sites, and exchanges phosphatidylserine (1,2-diacyl-sn-glycero-3-phospho-L-serine, PS) for phosphatidylinositol-4-phosphate (1,2-diacyl-sn-glycero-3-phospho-(1D-myo-inositol 4-phosphate), PI(4)P) between the two organelles, a step that is critical for sphingomyelin synthesis in the Golgi complex. This is Oxysterol-binding protein-related protein 9 (osbpl9) from Xenopus tropicalis (Western clawed frog).